The primary structure comprises 188 residues: MPSPVATVETDSLQQPILGSRRPSNYFWAIAVSVGGTGLLLAGLSSYLQVNLLPFSEPTRLAFLPQGLVMGLYGIAAILLASYLWFVISLDVGGGYNAFDRKTQKATIFRWGFPGKNRRVEITYPLSDIQAVRVDIKEGLNPKRALYLKVKGRGDVPLTRVGQPLPLTELESQGAELARFLAVPLEGL.

The next 2 helical transmembrane spans lie at 26 to 46 and 68 to 88; these read YFWA…GLSS and LVMG…WFVI.

Belongs to the Ycf4 family.

It localises to the cellular thylakoid membrane. Seems to be required for the assembly of the photosystem I complex. The polypeptide is Photosystem I assembly protein Ycf4 (Synechococcus elongatus (strain ATCC 33912 / PCC 7942 / FACHB-805) (Anacystis nidulans R2)).